A 503-amino-acid chain; its full sequence is Aspartyl/glutamyl-tRNA(Asn/Gln) amidotransferase subunit B (503 aa).

It belongs to the GatB/GatE family. GatB subfamily. As to quaternary structure, heterotrimer of A, B and C subunits.

The catalysed reaction is L-glutamyl-tRNA(Gln) + L-glutamine + ATP + H2O = L-glutaminyl-tRNA(Gln) + L-glutamate + ADP + phosphate + H(+). It catalyses the reaction L-aspartyl-tRNA(Asn) + L-glutamine + ATP + H2O = L-asparaginyl-tRNA(Asn) + L-glutamate + ADP + phosphate + 2 H(+). Its function is as follows. Allows the formation of correctly charged Asn-tRNA(Asn) or Gln-tRNA(Gln) through the transamidation of misacylated Asp-tRNA(Asn) or Glu-tRNA(Gln) in organisms which lack either or both of asparaginyl-tRNA or glutaminyl-tRNA synthetases. The reaction takes place in the presence of glutamine and ATP through an activated phospho-Asp-tRNA(Asn) or phospho-Glu-tRNA(Gln). The chain is Aspartyl/glutamyl-tRNA(Asn/Gln) amidotransferase subunit B from Nocardia farcinica (strain IFM 10152).